Here is a 396-residue protein sequence, read N- to C-terminus: L-lactate dehydrogenase (396 aa).

The FMN hydroxy acid dehydrogenase domain occupies 1–380 (MIISAASDYR…TQDSLVQGLG (380 aa)). Residue tyrosine 24 coordinates substrate. FMN-binding residues include serine 106 and glutamine 127. Residue tyrosine 129 participates in substrate binding. Residue threonine 155 participates in FMN binding. Arginine 164 is a binding site for substrate. Lysine 251 contributes to the FMN binding site. The Proton acceptor role is filled by histidine 275. Arginine 278 contributes to the substrate binding site. 306–330 (DSGIRNGLDVVRMIALGADTILLGR) contacts FMN.

This sequence belongs to the FMN-dependent alpha-hydroxy acid dehydrogenase family. Requires FMN as cofactor.

Its subcellular location is the cell inner membrane. It catalyses the reaction (S)-lactate + A = pyruvate + AH2. Functionally, catalyzes the conversion of L-lactate to pyruvate. Is coupled to the respiratory chain. This is L-lactate dehydrogenase from Escherichia coli O81 (strain ED1a).